A 702-amino-acid polypeptide reads, in one-letter code: NAD(P)H-quinone oxidoreductase subunit 5, chloroplastic (702 aa).

16 helical membrane-spanning segments follow: residues 7-27 (YVWIIPLLPCLTAVILGLGLI), 40-60 (SAILSIGALLVTMLLSITVLW), 91-111 (PLSAIMLVLVTTVGVLVMIYT), 124-144 (FFAYLSLFTASMLGLVLSPNL), 147-167 (VYAFWELVGMCSYLLVGFWFT), 189-209 (LLLGILALYWLTGSLEFDIVA), 224-244 (VLLTVCCVLLFLGPIAKSAQF), 258-278 (TPISALIHAATMVAAGVYLVA), 289-309 (LVMDIVAWTGGITAVLGATVA), 327-347 (LGYMILALGVGSYQAGLFHLI), 354-374 (ALLFLGSGSVIHGIEPVVGYN), 395-415 (GVTFLIGTLSLCGVPPFACFW), 427-447 (KLPVLGLLAWLTAGLTAFYMF), 511-531 (IPLIVLTIPTILIGFIGAPLP), 562-582 (FAITALPSVSIGILGAFIAWI), and 680-700 (IFVLGIGLVFVMIAAVLFNFF).

Belongs to the complex I subunit 5 family. NDH is composed of at least 16 different subunits, 5 of which are encoded in the nucleus.

The protein localises to the plastid. The protein resides in the chloroplast thylakoid membrane. It carries out the reaction a plastoquinone + NADH + (n+1) H(+)(in) = a plastoquinol + NAD(+) + n H(+)(out). It catalyses the reaction a plastoquinone + NADPH + (n+1) H(+)(in) = a plastoquinol + NADP(+) + n H(+)(out). NDH shuttles electrons from NAD(P)H:plastoquinone, via FMN and iron-sulfur (Fe-S) centers, to quinones in the photosynthetic chain and possibly in a chloroplast respiratory chain. The immediate electron acceptor for the enzyme in this species is believed to be plastoquinone. Couples the redox reaction to proton translocation, and thus conserves the redox energy in a proton gradient. This Zygnema circumcarinatum (Green alga) protein is NAD(P)H-quinone oxidoreductase subunit 5, chloroplastic (ndhF).